The following is a 927-amino-acid chain: BTB/POZ domain-containing protein KCTD19 (927 aa).

The BTB 1 domain maps to 18–72 (NVGGWHFSVPRSKLAQFPDSLLWKEASALTSSENQRLFIDRDGSTFRHVHYYLYT). Residue Ser-270 is modified to Phosphoserine. Residues 399–486 (IKLYVGSHWY…YHIPALSEAL (88 aa)) form the BTB 2 domain. The disordered stretch occupies residues 664 to 760 (VEEASLHVPS…NANGTDNPGA (97 aa)). A compositionally biased stretch (basic and acidic residues) spans 731-743 (DWGKQRPKDRESP).

In terms of assembly, identified in a complex with ZNF541, HDAC1 and HSPA2. Identified in a complex with ZNF541 and HDAC1. Identified in a complex with HDAC1, HDAC2, DNTTIP1 and ZNF541. In terms of tissue distribution, detected in adult testis.

The protein resides in the nucleus. Functionally, transcription regulator which is essential for male fertility and for the completion of meiotic prophase in spermatocytes. Regulates progression of the pachytene stage of meiotic prophase and promotes the transcriptional activation activity ZNF541. Required for the organization of chromosomes during metaphase I. This chain is BTB/POZ domain-containing protein KCTD19 (Kctd19), found in Mus musculus (Mouse).